The following is a 911-amino-acid chain: Isoleucine--tRNA ligase (911 aa).

The 'HIGH' region motif lies at 57 to 67; the sequence is PYANGDIHMGH. Glutamate 551 is an L-isoleucyl-5'-AMP binding site. The 'KMSKS' region signature appears at 592-596; that stretch reads KMSKS. Lysine 595 serves as a coordination point for ATP. Zn(2+)-binding residues include cysteine 881, cysteine 884, cysteine 901, and cysteine 904.

This sequence belongs to the class-I aminoacyl-tRNA synthetase family. IleS type 1 subfamily. As to quaternary structure, monomer. The cofactor is Zn(2+).

The protein resides in the cytoplasm. It catalyses the reaction tRNA(Ile) + L-isoleucine + ATP = L-isoleucyl-tRNA(Ile) + AMP + diphosphate. Functionally, catalyzes the attachment of isoleucine to tRNA(Ile). As IleRS can inadvertently accommodate and process structurally similar amino acids such as valine, to avoid such errors it has two additional distinct tRNA(Ile)-dependent editing activities. One activity is designated as 'pretransfer' editing and involves the hydrolysis of activated Val-AMP. The other activity is designated 'posttransfer' editing and involves deacylation of mischarged Val-tRNA(Ile). This Exiguobacterium sibiricum (strain DSM 17290 / CCUG 55495 / CIP 109462 / JCM 13490 / 255-15) protein is Isoleucine--tRNA ligase.